The primary structure comprises 126 residues: Glycine cleavage system H protein (126 aa).

Residues 24 to 106 (TITVGITDHA…YGEGWFFRMK (83 aa)) enclose the Lipoyl-binding domain. The residue at position 65 (lysine 65) is an N6-lipoyllysine.

It belongs to the GcvH family. The glycine cleavage system is composed of four proteins: P, T, L and H. (R)-lipoate is required as a cofactor.

In terms of biological role, the glycine cleavage system catalyzes the degradation of glycine. The H protein shuttles the methylamine group of glycine from the P protein to the T protein. The protein is Glycine cleavage system H protein of Psychrobacter arcticus (strain DSM 17307 / VKM B-2377 / 273-4).